A 494-amino-acid polypeptide reads, in one-letter code: MNAPVKPSHLIKGATGEWEMVIGIEVHAQVTSNAKLFSGASTAFGGDPNSHVSLVDAAMPGMLPVINEECVRQAVRTGLGLNARINLRSVFDRKNYFYPDLPQGYQISQYKSPIVGEGEVVVDLADGTSFVVGIERLHLEQDAGKSLHDQHADMSAIDLNRSGVALMEIVSRPDMRSSEQARAYVTKLRTILRYLGTCDGDMEKGNLRADVNVSVRRPGEPFGTRCEIKNVNSIRFIGQAIEYEARRQIGILEDGGGIDQETRLFDPDKGETRAMRSKEEAHDYRYFPDPDLLPLEFSQGLVDALKADLPELPDQKKARFVTDLGLTSYDAAVLVSEHESANFYESVLADLADARRDGKAAANWVINELFGRLNKQGLSIEASPVSASQLAAIIDLIGEGTISGKIAKDLFEIVWSEGGDPRALVEARGMKQVTDVGAIEKVVDDIVAANPDKVAQVRAKPQMIGWFVGQVMKASGGKVNPQAVNDLLKAKLGL.

This sequence belongs to the GatB/GatE family. GatB subfamily. In terms of assembly, heterotrimer of A, B and C subunits.

The enzyme catalyses L-glutamyl-tRNA(Gln) + L-glutamine + ATP + H2O = L-glutaminyl-tRNA(Gln) + L-glutamate + ADP + phosphate + H(+). It catalyses the reaction L-aspartyl-tRNA(Asn) + L-glutamine + ATP + H2O = L-asparaginyl-tRNA(Asn) + L-glutamate + ADP + phosphate + 2 H(+). In terms of biological role, allows the formation of correctly charged Asn-tRNA(Asn) or Gln-tRNA(Gln) through the transamidation of misacylated Asp-tRNA(Asn) or Glu-tRNA(Gln) in organisms which lack either or both of asparaginyl-tRNA or glutaminyl-tRNA synthetases. The reaction takes place in the presence of glutamine and ATP through an activated phospho-Asp-tRNA(Asn) or phospho-Glu-tRNA(Gln). The polypeptide is Aspartyl/glutamyl-tRNA(Asn/Gln) amidotransferase subunit B (Nitrobacter winogradskyi (strain ATCC 25391 / DSM 10237 / CIP 104748 / NCIMB 11846 / Nb-255)).